Here is a 575-residue protein sequence, read N- to C-terminus: Reverse gyrse subunit B (575 aa).

The RG N-terminal-type; degenerate zinc-finger motif lies at 1–39 (MKIYYNNVCPNCSGRISNERLIKGLPCENDYPYEEGTIE). ATP is bound by residues glutamine 83 and 100-107 (APTGMGKT). The 161-residue stretch at 87–247 (FIRAYKGYSF…KLKISGKDLE (161 aa)) folds into the Helicase ATP-binding domain. A DEAD box motif is present at residues 204-207 (DDVD). The region spanning 316 to 465 (QTLELIKKLG…ALKMVEEAIE (150 aa)) is the Helicase C-terminal domain.

Belongs to the DEAD box helicase family. DDVD subfamily. As to quaternary structure, heterodimer of an RgyA and RgyB subunit.

Its subcellular location is the cytoplasm. It catalyses the reaction ATP + H2O = ADP + phosphate + H(+). Its function is as follows. Modifies the topological state of DNA by introducing positive supercoils in an ATP-dependent process. Binds to single-stranded DNA, transiently cleaves and then rejoins the end, introducing a positive supercoil in the process. The scissile phosphodiester is attacked by the catalytic tyrosine of the enzyme, resulting in the formation of a DNA-(5'-phosphotyrosyl)-enzyme intermediate. Probably involved in rewinding DNA strands in regions of the chromosome that have opened up to allow replication, transcription, DNA repair or for DNA protection. Reconstituted holoenzyme binds dsDNA a bit better than ssDNA, this subunit preferentially binds dsDNA. In isolation this subunit has DNA-stimulated ATPase activity that is stimulated by topoisomerase-domain containing RgyA. This subunit inhibits the relaxation activity of the topoisomerase subunit while promoting positive supercoiling. This chain is Reverse gyrse subunit B, found in Nanoarchaeum equitans (strain Kin4-M).